A 121-amino-acid chain; its full sequence is Nitrogenase-stabilizing/protective protein NifW (121 aa).

The protein belongs to the NifW family. As to quaternary structure, homotrimer; associates with NifD.

Its function is as follows. May protect the nitrogenase Fe-Mo protein from oxidative damage. The polypeptide is Nitrogenase-stabilizing/protective protein NifW (Leptothrix cholodnii (strain ATCC 51168 / LMG 8142 / SP-6) (Leptothrix discophora (strain SP-6))).